The following is a 336-amino-acid chain: uncharacterized protein (336 aa).

It to bacterial alkanal monooxygenase alpha and beta chains.

This is an uncharacterized protein from Bacillus subtilis (strain 168).